Reading from the N-terminus, the 602-residue chain is Prostaglandin G/H synthase 1 (602 aa).

An N-terminal signal peptide occupies residues 1 to 26 (MSRRSLSLQFPLLLLLLLLPPPPVLL). Residues 34–72 (PVNPCCYYPCQNQGVCVRFGLDHYQCDCTRTGYSGPNCT) form the EGF-like domain. 4 cysteine pairs are disulfide-bonded: cysteine 38–cysteine 49, cysteine 39–cysteine 161, cysteine 43–cysteine 59, and cysteine 61–cysteine 71. N-linked (GlcNAc...) asparagine glycosylation is found at asparagine 70, asparagine 106, and asparagine 146. Residue histidine 209 is the Proton acceptor of the active site. The active-site For cyclooxygenase activity is the tyrosine 387. Position 390 (histidine 390) interacts with heme b. N-linked (GlcNAc...) asparagine glycosylation occurs at asparagine 412. Residues cysteine 571 and cysteine 577 are joined by a disulfide bond.

It belongs to the prostaglandin G/H synthase family. As to quaternary structure, homodimer. It depends on heme b as a cofactor.

The protein localises to the microsome membrane. Its subcellular location is the endoplasmic reticulum membrane. It carries out the reaction (5Z,8Z,11Z,14Z)-eicosatetraenoate + AH2 + 2 O2 = prostaglandin H2 + A + H2O. The enzyme catalyses (5Z,8Z,11Z,14Z)-eicosatetraenoate + 2 O2 = prostaglandin G2. The catalysed reaction is prostaglandin G2 + AH2 = prostaglandin H2 + A + H2O. It catalyses the reaction (9Z,12Z)-octadecadienoate + AH2 + O2 = (9R)-hydroxy-(10E,12Z)-octadecadienoate + A + H2O. It carries out the reaction (9Z,12Z)-octadecadienoate + AH2 + O2 = (9S)-hydroxy-(10E,12Z)-octadecadienoate + A + H2O. The enzyme catalyses (9Z,12Z)-octadecadienoate + AH2 + O2 = (13S)-hydroxy-(9Z,11E)-octadecadienoate + A + H2O. The catalysed reaction is (9Z,12Z)-octadecadienoate + AH2 + O2 = (13R)-hydroxy-(9Z,11E)-octadecadienoate + A + H2O. The protein operates within lipid metabolism; prostaglandin biosynthesis. With respect to regulation, the cyclooxygenase activity is inhibited by nonsteroidal anti-inflammatory drugs (NSAIDs) including ibuprofen, flurbiprofen, ketoprofen, naproxen, flurbiprofen, anirolac, fenclofenac and diclofenac. In terms of biological role, dual cyclooxygenase and peroxidase that plays an important role in the biosynthesis pathway of prostanoids, a class of C20 oxylipins mainly derived from arachidonate ((5Z,8Z,11Z,14Z)-eicosatetraenoate, AA, C20:4(n-6)), with a particular role in the inflammatory response. The cyclooxygenase activity oxygenates AA to the hydroperoxy endoperoxide prostaglandin G2 (PGG2), and the peroxidase activity reduces PGG2 to the hydroxy endoperoxide prostaglandin H2 (PGH2), the precursor of all 2-series prostaglandins and thromboxanes. This complex transformation is initiated by abstraction of hydrogen at carbon 13 (with S-stereochemistry), followed by insertion of molecular O2 to form the endoperoxide bridge between carbon 9 and 11 that defines prostaglandins. The insertion of a second molecule of O2 (bis-oxygenase activity) yields a hydroperoxy group in PGG2 that is then reduced to PGH2 by two electrons. Involved in the constitutive production of prostanoids in particular in the stomach and platelets. In gastric epithelial cells, it is a key step in the generation of prostaglandins, such as prostaglandin E2 (PGE2), which plays an important role in cytoprotection. In platelets, it is involved in the generation of thromboxane A2 (TXA2), which promotes platelet activation and aggregation, vasoconstriction and proliferation of vascular smooth muscle cells. Can also use linoleate (LA, (9Z,12Z)-octadecadienoate, C18:2(n-6)) as substrate and produce hydroxyoctadecadienoates (HODEs) in a regio- and stereospecific manner, being (9R)-HODE ((9R)-hydroxy-(10E,12Z)-octadecadienoate) and (13S)-HODE ((13S)-hydroxy-(9Z,11E)-octadecadienoate) its major products. In Rattus norvegicus (Rat), this protein is Prostaglandin G/H synthase 1.